The chain runs to 480 residues: UDP-N-acetylmuramoylalanine--D-glutamate ligase (480 aa).

120–126 (GTNGKTT) is an ATP binding site.

The protein belongs to the MurCDEF family.

The protein resides in the cytoplasm. The catalysed reaction is UDP-N-acetyl-alpha-D-muramoyl-L-alanine + D-glutamate + ATP = UDP-N-acetyl-alpha-D-muramoyl-L-alanyl-D-glutamate + ADP + phosphate + H(+). It functions in the pathway cell wall biogenesis; peptidoglycan biosynthesis. In terms of biological role, cell wall formation. Catalyzes the addition of glutamate to the nucleotide precursor UDP-N-acetylmuramoyl-L-alanine (UMA). The protein is UDP-N-acetylmuramoylalanine--D-glutamate ligase of Nocardia farcinica (strain IFM 10152).